We begin with the raw amino-acid sequence, 358 residues long: UDP-N-acetylglucosamine--N-acetylmuramyl-(pentapeptide) pyrophosphoryl-undecaprenol N-acetylglucosamine transferase (358 aa).

UDP-N-acetyl-alpha-D-glucosamine is bound by residues 11–13 (TGG), N120, R161, S188, and Q282.

Belongs to the glycosyltransferase 28 family. MurG subfamily.

Its subcellular location is the cell inner membrane. It carries out the reaction di-trans,octa-cis-undecaprenyl diphospho-N-acetyl-alpha-D-muramoyl-L-alanyl-D-glutamyl-meso-2,6-diaminopimeloyl-D-alanyl-D-alanine + UDP-N-acetyl-alpha-D-glucosamine = di-trans,octa-cis-undecaprenyl diphospho-[N-acetyl-alpha-D-glucosaminyl-(1-&gt;4)]-N-acetyl-alpha-D-muramoyl-L-alanyl-D-glutamyl-meso-2,6-diaminopimeloyl-D-alanyl-D-alanine + UDP + H(+). Its pathway is cell wall biogenesis; peptidoglycan biosynthesis. Cell wall formation. Catalyzes the transfer of a GlcNAc subunit on undecaprenyl-pyrophosphoryl-MurNAc-pentapeptide (lipid intermediate I) to form undecaprenyl-pyrophosphoryl-MurNAc-(pentapeptide)GlcNAc (lipid intermediate II). This is UDP-N-acetylglucosamine--N-acetylmuramyl-(pentapeptide) pyrophosphoryl-undecaprenol N-acetylglucosamine transferase from Synechococcus sp. (strain CC9902).